A 326-amino-acid polypeptide reads, in one-letter code: tRNA uridine(34) hydroxylase (326 aa).

The Rhodanese domain occupies 123-217; that stretch reads SDPDVLLVDT…YLEEVPEENS (95 aa). C177 serves as the catalytic Cysteine persulfide intermediate. Basic and acidic residues predominate over residues 276-320; sequence EEQKSRFREREKQVQLANERGETHVGGDAAKLIEQRKQEKKEKKQ. Residues 276–326 are disordered; that stretch reads EEQKSRFREREKQVQLANERGETHVGGDAAKLIEQRKQEKKEKKQQQRSSK.

This sequence belongs to the TrhO family.

The catalysed reaction is uridine(34) in tRNA + AH2 + O2 = 5-hydroxyuridine(34) in tRNA + A + H2O. Catalyzes oxygen-dependent 5-hydroxyuridine (ho5U) modification at position 34 in tRNAs. This is tRNA uridine(34) hydroxylase from Aliivibrio salmonicida (strain LFI1238) (Vibrio salmonicida (strain LFI1238)).